Here is a 470-residue protein sequence, read N- to C-terminus: Methylenetetrahydrofolate--tRNA-(uracil-5-)-methyltransferase TrmFO (470 aa).

10–15 (GAGLAG) provides a ligand contact to FAD.

The protein belongs to the MnmG family. TrmFO subfamily. FAD serves as cofactor.

It is found in the cytoplasm. It catalyses the reaction uridine(54) in tRNA + (6R)-5,10-methylene-5,6,7,8-tetrahydrofolate + NADH + H(+) = 5-methyluridine(54) in tRNA + (6S)-5,6,7,8-tetrahydrofolate + NAD(+). The enzyme catalyses uridine(54) in tRNA + (6R)-5,10-methylene-5,6,7,8-tetrahydrofolate + NADPH + H(+) = 5-methyluridine(54) in tRNA + (6S)-5,6,7,8-tetrahydrofolate + NADP(+). Its function is as follows. Catalyzes the folate-dependent formation of 5-methyl-uridine at position 54 (M-5-U54) in all tRNAs. This Prochlorococcus marinus (strain MIT 9312) protein is Methylenetetrahydrofolate--tRNA-(uracil-5-)-methyltransferase TrmFO.